Here is an 88-residue protein sequence, read N- to C-terminus: Putative membrane protein insertion efficiency factor (88 aa).

Belongs to the UPF0161 family.

It is found in the cell membrane. Could be involved in insertion of integral membrane proteins into the membrane. This chain is Putative membrane protein insertion efficiency factor, found in Exiguobacterium sibiricum (strain DSM 17290 / CCUG 55495 / CIP 109462 / JCM 13490 / 255-15).